The following is a 364-amino-acid chain: UDP-N-acetylglucosamine--N-acetylmuramyl-(pentapeptide) pyrophosphoryl-undecaprenol N-acetylglucosamine transferase (364 aa).

Residues 12 to 14 (TGG), Asn-124, Arg-167, Ser-195, Ile-249, 268 to 273 (ALTVSE), and Gln-294 each bind UDP-N-acetyl-alpha-D-glucosamine.

Belongs to the glycosyltransferase 28 family. MurG subfamily.

Its subcellular location is the cell inner membrane. It catalyses the reaction di-trans,octa-cis-undecaprenyl diphospho-N-acetyl-alpha-D-muramoyl-L-alanyl-D-glutamyl-meso-2,6-diaminopimeloyl-D-alanyl-D-alanine + UDP-N-acetyl-alpha-D-glucosamine = di-trans,octa-cis-undecaprenyl diphospho-[N-acetyl-alpha-D-glucosaminyl-(1-&gt;4)]-N-acetyl-alpha-D-muramoyl-L-alanyl-D-glutamyl-meso-2,6-diaminopimeloyl-D-alanyl-D-alanine + UDP + H(+). The protein operates within cell wall biogenesis; peptidoglycan biosynthesis. Cell wall formation. Catalyzes the transfer of a GlcNAc subunit on undecaprenyl-pyrophosphoryl-MurNAc-pentapeptide (lipid intermediate I) to form undecaprenyl-pyrophosphoryl-MurNAc-(pentapeptide)GlcNAc (lipid intermediate II). The chain is UDP-N-acetylglucosamine--N-acetylmuramyl-(pentapeptide) pyrophosphoryl-undecaprenol N-acetylglucosamine transferase from Alteromonas mediterranea (strain DSM 17117 / CIP 110805 / LMG 28347 / Deep ecotype).